The sequence spans 211 residues: Thymidylate kinase (211 aa).

Residue 7–14 (GIDGCGKT) participates in ATP binding.

The protein belongs to the thymidylate kinase family.

It carries out the reaction dTMP + ATP = dTDP + ADP. In terms of biological role, phosphorylation of dTMP to form dTDP in both de novo and salvage pathways of dTTP synthesis. The protein is Thymidylate kinase of Anaplasma marginale (strain St. Maries).